Reading from the N-terminus, the 335-residue chain is Methionine import ATP-binding protein MetN 2 (335 aa).

The ABC transporter domain occupies 2–242 (IEFQNVHKTY…PEHPTTKRFV (241 aa)). 38–45 (GHSGAGKS) contacts ATP.

It belongs to the ABC transporter superfamily. Methionine importer (TC 3.A.1.24) family. In terms of assembly, the complex is composed of two ATP-binding proteins (MetN), two transmembrane proteins (MetI) and a solute-binding protein (MetQ).

Its subcellular location is the cell inner membrane. It carries out the reaction L-methionine(out) + ATP + H2O = L-methionine(in) + ADP + phosphate + H(+). It catalyses the reaction D-methionine(out) + ATP + H2O = D-methionine(in) + ADP + phosphate + H(+). Functionally, part of the ABC transporter complex MetNIQ involved in methionine import. Responsible for energy coupling to the transport system. The protein is Methionine import ATP-binding protein MetN 2 of Pseudomonas entomophila (strain L48).